Here is a 100-residue protein sequence, read N- to C-terminus: NADH-quinone oxidoreductase subunit K (100 aa).

3 helical membrane-spanning segments follow: residues 4–24 (TSYY…GVLL), 29–49 (IVIF…LVAF), and 61–81 (IVFF…ALLV).

It belongs to the complex I subunit 4L family. As to quaternary structure, NDH-1 is composed of 14 different subunits. Subunits NuoA, H, J, K, L, M, N constitute the membrane sector of the complex.

It is found in the cell membrane. It carries out the reaction a quinone + NADH + 5 H(+)(in) = a quinol + NAD(+) + 4 H(+)(out). Functionally, NDH-1 shuttles electrons from NADH, via FMN and iron-sulfur (Fe-S) centers, to quinones in the respiratory chain. The immediate electron acceptor for the enzyme in this species is believed to be ubiquinone. Couples the redox reaction to proton translocation (for every two electrons transferred, four hydrogen ions are translocated across the cytoplasmic membrane), and thus conserves the redox energy in a proton gradient. The polypeptide is NADH-quinone oxidoreductase subunit K (Chloroflexus aggregans (strain MD-66 / DSM 9485)).